We begin with the raw amino-acid sequence, 177 residues long: KxDL motif-containing protein 1 (177 aa).

Position 1 is an N-acetylmethionine (Met1). The tract at residues 100 to 177 (SHIPEGSFLE…TDDEEETHEE (78 aa)) is disordered. Residues 125–145 (ATSEQSTGSCDTSPDTVSPSL) are compositionally biased toward polar residues.

The protein belongs to the KXD1 family. In terms of assembly, component of the BLOC-one-related complex (BORC) which is composed of BLOC1S1, BLOC1S2, BORCS5, BORCS6, BORCS7, BORCS8, KXD1 and SNAPIN. Associates with the BLOC-1 complex. Interacts with BLOC1S1. Interacts with DTNBP1/BLOC1S7 (via coiled-coil domain). Widely expressed.

The protein resides in the lysosome membrane. Its function is as follows. As part of the BORC complex may play a role in lysosomes movement and localization at the cell periphery. Associated with the cytosolic face of lysosomes, the BORC complex may recruit ARL8B and couple lysosomes to microtubule plus-end-directed kinesin motor. May also be involved in the biogenesis of lysosome-related organelles such as melanosomes. The polypeptide is KxDL motif-containing protein 1 (Kxd1) (Mus musculus (Mouse)).